The chain runs to 794 residues: Cadherin-12 (794 aa).

The signal sequence occupies residues 1-23 (MLTRNCLSLLLWVLFDGGLLTPL). The propeptide occupies 24–54 (QPQPQQTLATEPRENVIHLPGQRSHFQRVKR). 5 consecutive Cadherin domains span residues 55-160 (GWVW…EPKF), 161-269 (LDGP…PPRF), 270-384 (PKSI…PPVF), 385-487 (SKPL…EFPP), and 488-609 (EISV…IFLP). The Extracellular segment spans residues 55–609 (GWVWNQFFVL…SCNVEAIFLP (555 aa)). N-linked (GlcNAc...) asparagine glycosylation is present at Asn-256. N-linked (GlcNAc...) asparagine glycans are attached at residues Asn-456, Asn-537, and Asn-545. A helical membrane pass occupies residues 610–637 (VGLSTGALIAILLCIVILLAIVVLYVAL). The Cytoplasmic segment spans residues 638 to 794 (RRQKKKDTLM…EESYNPDKVT (157 aa)). Ser-787 is modified (phosphoserine).

In terms of tissue distribution, brain.

It localises to the cell membrane. Cadherins are calcium-dependent cell adhesion proteins. They preferentially interact with themselves in a homophilic manner in connecting cells; cadherins may thus contribute to the sorting of heterogeneous cell types. This is Cadherin-12 (CDH12) from Homo sapiens (Human).